We begin with the raw amino-acid sequence, 468 residues long: Sorting and assembly machinery component 50 homolog B (468 aa).

Positions Met1–Ala25 are disordered. In terms of domain architecture, POTRA spans Val44 to Leu124.

The protein belongs to the SAM50/omp85 family. In terms of assembly, associates with the mitochondrial contact site and cristae organizing system (MICOS) complex (also known as MINOS or MitOS complex).

It is found in the mitochondrion outer membrane. Functionally, may play a role in the maintenance of the structure of mitochondrial cristae. The sequence is that of Sorting and assembly machinery component 50 homolog B (samm50-b) from Xenopus laevis (African clawed frog).